The primary structure comprises 226 residues: PKHD-type hydroxylase PSPA7_5129 (226 aa).

A Fe2OG dioxygenase domain is found at Lys78 to Ser178. The Fe cation site is built by His96, Asp98, and His159. Arg169 provides a ligand contact to 2-oxoglutarate.

The cofactor is Fe(2+). L-ascorbate is required as a cofactor.

This chain is PKHD-type hydroxylase PSPA7_5129, found in Pseudomonas paraeruginosa (strain DSM 24068 / PA7) (Pseudomonas aeruginosa (strain PA7)).